The chain runs to 334 residues: Protein NlpD/LppB homolog (334 aa).

The region spanning 89 to 133 is the LysM domain; that stretch reads IFYIVKSKDTMYSIAKNSGYNYHELSKFNSIKKPYKIIIGQKIWM.

This sequence belongs to the E.coli NlpD/Haemophilus LppB family.

The polypeptide is Protein NlpD/LppB homolog (Buchnera aphidicola subsp. Acyrthosiphon pisum (strain APS) (Acyrthosiphon pisum symbiotic bacterium)).